The sequence spans 495 residues: Serine/threonine protein phosphatase 2A 57 kDa regulatory subunit B' alpha isoform (495 aa).

The segment covering 1 to 13 (MFKKIMKGANRKA) has biased composition (basic residues). Disordered stretches follow at residues 1 to 61 (MFKK…AATT) and 462 to 495 (QAKS…MITS). A compositionally biased stretch (polar residues) spans 49–61 (VPSSPNSMAAATT).

This sequence belongs to the phosphatase 2A regulatory subunit B56 family. PP2A consists of a common heteromeric enzyme, composed of a catalytic subunit (subunits C), a constant regulatory subunit (subunit A), and a variety of regulatory subunits such as subunits B (the R2/B/PR55/B55, R3/B''/PR72/PR130/PR59 and R5/B'/B56 families). Interacts with BZR1. Interacts with BRI1. Interacts with SRK2E/OST1. In terms of tissue distribution, expressed ubiquitously, higher levels in leaves.

Its subcellular location is the nucleus. The protein resides in the cytoplasm. Functionally, the B regulatory subunit may modulate substrate selectivity and catalytic activity, and may also direct the localization of the catalytic enzyme to a particular subcellular compartment. Required for the formation of the PP2A holoenzyme that positively regulates brassinosteroid signaling by dephosphorylating and activating BZR1. This Arabidopsis thaliana (Mouse-ear cress) protein is Serine/threonine protein phosphatase 2A 57 kDa regulatory subunit B' alpha isoform (B'ALPHA).